Reading from the N-terminus, the 297-residue chain is Sirohydrochlorin cobaltochelatase CbiKP (297 aa).

An N-terminal signal peptide occupies residues 1–28; it reads MSRHPMVTRLLCLVFSCLIILACSPAFA. Position 124 (His124) interacts with heme. His182 acts as the Proton acceptor in catalysis. His182, Glu212, and His244 together coordinate Co(2+).

This sequence belongs to the CbiK family. As to quaternary structure, homotetramer; dimer of dimers.

Its subcellular location is the periplasm. The catalysed reaction is Co-sirohydrochlorin + 2 H(+) = sirohydrochlorin + Co(2+). The enzyme catalyses siroheme + 2 H(+) = sirohydrochlorin + Fe(2+). Functionally, catalyzes the insertion of Co(2+) into sirohydrochlorin. To a lesser extent, is also able to insert Fe(2+) into sirohydrochlorin, yielding siroheme. Its periplasmic location means that it cannot participate in cobalamin biosynthesis and its genomic environment suggests it is likely to be associated with a heme or metal transport system. This is Sirohydrochlorin cobaltochelatase CbiKP (cbiKp) from Nitratidesulfovibrio vulgaris (strain ATCC 29579 / DSM 644 / CCUG 34227 / NCIMB 8303 / VKM B-1760 / Hildenborough) (Desulfovibrio vulgaris).